The sequence spans 205 residues: Peptidyl-prolyl cis-trans isomerase B (205 aa).

The first 20 residues, 1 to 20, serve as a signal peptide directing secretion; sequence MKFSGLWCWLLLFLSVNVIA. Residues 39–198 form the PPIase cyclophilin-type domain; it reads FFDIEHGEEK…EAVKIAKCGE (160 aa).

This sequence belongs to the cyclophilin-type PPIase family. PPIase B subfamily.

It localises to the secreted. The catalysed reaction is [protein]-peptidylproline (omega=180) = [protein]-peptidylproline (omega=0). Its activity is regulated as follows. Cyclosporin A (CsA) inhibits CYPB. PPIases accelerate the folding of proteins. It catalyzes the cis-trans isomerization of proline imidic peptide bonds in oligopeptides. This is Peptidyl-prolyl cis-trans isomerase B (CPR2) from Saccharomyces cerevisiae (strain ATCC 204508 / S288c) (Baker's yeast).